The primary structure comprises 112 residues: UPF0342 protein SSU05_1260 (112 aa).

Belongs to the UPF0342 family.

This is UPF0342 protein SSU05_1260 from Streptococcus suis (strain 05ZYH33).